A 428-amino-acid polypeptide reads, in one-letter code: NADH-ubiquinone oxidoreductase chain 2 (428 aa).

Helical transmembrane passes span 22–42, 59–79, 84–104, 108–128, 140–160, 185–205, 218–238, 241–261, 269–289, 292–312, 332–352, 356–376, 384–404, and 408–428; these read IAFLSLLGYFVIMLNIWLHFG, LDESILSALLFILFLGLVIMN, LGWEFHLLLMGGLTGAIYMLT, LLLMVVGFEFLNLSTYLILSL, LLSSAFYTTLLLLAISFFYGL, ILLLGTIAFKLGLVPAHLWVP, WMGSVPKAAVLLWLPTIYPLL, LAPFLLVLSALSFLLSAVLMA, FLAYSAIGHLGFVVAAFAIGD, AYGYYIFIYMIATLAQFVLLS, LGLGFLVIVLTMASLPPFAGF, LLVLFGFLEIGYGIFAVLLIL, YYLKWIQTTFFSVVPFASAPI, and YPNLVSFLVTLILPSTLLLLL.

Belongs to the complex I subunit 2 family.

Its subcellular location is the mitochondrion inner membrane. The catalysed reaction is a ubiquinone + NADH + 5 H(+)(in) = a ubiquinol + NAD(+) + 4 H(+)(out). Its function is as follows. Core subunit of the mitochondrial membrane respiratory chain NADH dehydrogenase (Complex I) that is believed to belong to the minimal assembly required for catalysis. Complex I functions in the transfer of electrons from NADH to the respiratory chain. The immediate electron acceptor for the enzyme is believed to be ubiquinone. This is NADH-ubiquinone oxidoreductase chain 2 from Hyaloraphidium curvatum (Lower fungus).